Reading from the N-terminus, the 159-residue chain is MINYLKSFFLYEIIRGMSLTLKYFFKPKVTINYPYEKSHVSPRFKGEHALRRYESGEERCIACKLCEAICPAQAIVIEADEREDGSRRTTRYDIDMTKCIYCGLCQEACPVDAIVEGPNFEFASLTHAALIYDKERLLQNGDRWEQALASKLHKDYEYR.

4Fe-4S ferredoxin-type domains lie at Arg-51–Asp-80 and Thr-90–Asn-119. Cys-60, Cys-63, Cys-66, Cys-70, Cys-99, Cys-102, Cys-105, and Cys-109 together coordinate [4Fe-4S] cluster.

This sequence belongs to the complex I 23 kDa subunit family. As to quaternary structure, NDH-1 is composed of 14 different subunits. Subunits NuoA, H, J, K, L, M, N constitute the membrane sector of the complex. [4Fe-4S] cluster is required as a cofactor.

The protein localises to the cell inner membrane. It carries out the reaction a quinone + NADH + 5 H(+)(in) = a quinol + NAD(+) + 4 H(+)(out). Functionally, NDH-1 shuttles electrons from NADH, via FMN and iron-sulfur (Fe-S) centers, to quinones in the respiratory chain. The immediate electron acceptor for the enzyme in this species is believed to be ubiquinone. Couples the redox reaction to proton translocation (for every two electrons transferred, four hydrogen ions are translocated across the cytoplasmic membrane), and thus conserves the redox energy in a proton gradient. The sequence is that of NADH-quinone oxidoreductase subunit I from Rickettsia akari (strain Hartford).